The following is a 396-amino-acid chain: Metacaspase-1 (396 aa).

Residues 1 to 20 are compositionally biased toward gly residues; it reads MSGYPGQGYQGQGYGQGYGQ. The tract at residues 1-86 is disordered; the sequence is MSGYPGQGYQ…PQGMQQFGHG (86 aa). Low complexity predominate over residues 47–62; it reads HYQYGPPQGGYQYPPQ. A compositionally biased stretch (polar residues) spans 72 to 81; the sequence is QAHQPPQGMQ. Active-site residues include H186 and C242.

The protein belongs to the peptidase C14B family.

In terms of biological role, involved in cell death (apoptosis). This is Metacaspase-1 (MCA1) from Pyricularia oryzae (strain 70-15 / ATCC MYA-4617 / FGSC 8958) (Rice blast fungus).